The sequence spans 249 residues: MSDENTTHFGFETVNAADKAERVAGVFHSVAAKYDLMNDVMSGGIHRLWKKFTIELSGVRPGDRVLDIAGGTGDLTAKFARLVGDEGQVVLADINDSMLKVGRDKLVDKGFLGNVQYAQADAQFLPFPDNTFDCITIAFGLRNVTDKDMALAAMNRVLKPGGRLLVLEFSKPQNSLLEKAYDLYSFNVLPMMGKLITQDADSYRYLAESIRMHPDQQTLKGMMENAGFAQCRYYNMTGGIVALHKGTKA.

Residues T72, D93, and 121–122 (DA) each bind S-adenosyl-L-methionine.

This sequence belongs to the class I-like SAM-binding methyltransferase superfamily. MenG/UbiE family.

The enzyme catalyses a 2-demethylmenaquinol + S-adenosyl-L-methionine = a menaquinol + S-adenosyl-L-homocysteine + H(+). It catalyses the reaction a 2-methoxy-6-(all-trans-polyprenyl)benzene-1,4-diol + S-adenosyl-L-methionine = a 5-methoxy-2-methyl-3-(all-trans-polyprenyl)benzene-1,4-diol + S-adenosyl-L-homocysteine + H(+). Its pathway is quinol/quinone metabolism; menaquinone biosynthesis; menaquinol from 1,4-dihydroxy-2-naphthoate: step 2/2. It participates in cofactor biosynthesis; ubiquinone biosynthesis. In terms of biological role, methyltransferase required for the conversion of demethylmenaquinol (DMKH2) to menaquinol (MKH2) and the conversion of 2-polyprenyl-6-methoxy-1,4-benzoquinol (DDMQH2) to 2-polyprenyl-3-methyl-6-methoxy-1,4-benzoquinol (DMQH2). This chain is Ubiquinone/menaquinone biosynthesis C-methyltransferase UbiE, found in Teredinibacter turnerae (strain ATCC 39867 / T7901).